The sequence spans 347 residues: Ornithine carbamoyltransferase (347 aa).

Residues 56-59 (STRT), Gln83, Arg107, and 134-137 (HPTQ) contribute to the carbamoyl phosphate site. Residues Asn168, Asp232, and 236 to 237 (SM) each bind L-ornithine. Residues 274–275 (CL) and Arg320 contribute to the carbamoyl phosphate site.

Belongs to the aspartate/ornithine carbamoyltransferase superfamily. OTCase family.

The protein resides in the cytoplasm. The enzyme catalyses carbamoyl phosphate + L-ornithine = L-citrulline + phosphate + H(+). Its function is as follows. Reversibly catalyzes the transfer of the carbamoyl group from carbamoyl phosphate (CP) to the N(epsilon) atom of ornithine (ORN) to produce L-citrulline. In Blochmanniella floridana, this protein is Ornithine carbamoyltransferase.